Here is a 503-residue protein sequence, read N- to C-terminus: Probable voltage-gated potassium channel subunit kvs-4 (503 aa).

Residues 1-231 (MNSAIMQGAA…EPASSGKAQA (231 aa)) are Cytoplasmic-facing. Positions 217 to 219 (WNI) match the Required for dendritic localization motif. Residues 232 to 252 (FAVCSVVFVLISISGLVLGSL) traverse the membrane as a helical segment. The Extracellular portion of the chain corresponds to 253 to 275 (PELQVATKQRNNLTGEEFTEMEP). N-linked (GlcNAc...) asparagine glycosylation occurs at N264. Residues 276–296 (MPILGYIEYVCIVWFTMEYGL) form a helical membrane-spanning segment. The Cytoplasmic segment spans residues 297–313 (KMLVSAERSKTFRQLLN). The chain crosses the membrane as a helical span at residues 314–334 (IIDLLAILPFIIEMLLLIFGI). Residues 335 to 346 (STEQLRDLKGAF) are Extracellular-facing. The helical; Voltage-sensor transmembrane segment at 347-366 (LVIRILRVLRVIRVLKLGRY) threads the bilayer. Residues 367–383 (SSGLQMFGKTLKASFRQ) lie on the Cytoplasmic side of the membrane. An S4-S5 linker region spans residues 368-383 (SGLQMFGKTLKASFRQ). A helical transmembrane segment spans residues 384–404 (LGMMAMVVMTGVIFFSTLVYF). Over 405–417 (LEKDEPASKFHSI) the chain is Extracellular. Residues 418-429 (PAACWWCIVTMT) constitute an intramembrane region (helical). Residues 430–434 (TVGYG) lie within the membrane without spanning it. The Selectivity filter signature appears at 430-435 (TVGYGD). The Extracellular portion of the chain corresponds to 435 to 445 (DLTPVTVPGKL). A helical membrane pass occupies residues 446-466 (VATGAIACGVLVLALPITIIV). Residues 467–503 (DNFMKVAETERPAGGNRYRTSQYPKATKSEQMILKVT) lie on the Cytoplasmic side of the membrane. Residues 496–500 (EQMIL) carry the Required for dendritic localization motif.

Belongs to the potassium channel family. B (Shab) (TC 1.A.1.2) subfamily. Kv2.2/KCNB2 sub-subfamily. In terms of assembly, homotetramer or heterotetramer. Interacts with unc-101 (via N-terminus); which targets kvs-4 to dendrites. In terms of tissue distribution, expressed in the cholinergic motor neuron DA9, mechanosensory neurons ALM and PLM, and the interneuron PVPL.

The protein resides in the cell membrane. Its subcellular location is the perikaryon. It is found in the cell projection. It localises to the axon. The protein localises to the dendrite. Its function is as follows. Voltage-gated potassium channel that mediates transmembrane potassium transport in excitable membranes. This is Probable voltage-gated potassium channel subunit kvs-4 from Caenorhabditis elegans.